A 786-amino-acid polypeptide reads, in one-letter code: Endonuclease MutS2 (786 aa).

335–342 (GPNTGGKT) is an ATP binding site. The Smr domain occupies 711-786 (LDLRGERFEN…GLGVTVVELK (76 aa)).

The protein belongs to the DNA mismatch repair MutS family. MutS2 subfamily. As to quaternary structure, homodimer. Binds to stalled ribosomes, contacting rRNA.

Functionally, endonuclease that is involved in the suppression of homologous recombination and thus may have a key role in the control of bacterial genetic diversity. Its function is as follows. Acts as a ribosome collision sensor, splitting the ribosome into its 2 subunits. Detects stalled/collided 70S ribosomes which it binds and splits by an ATP-hydrolysis driven conformational change. Acts upstream of the ribosome quality control system (RQC), a ribosome-associated complex that mediates the extraction of incompletely synthesized nascent chains from stalled ribosomes and their subsequent degradation. Probably generates substrates for RQC. This Bacillus cereus (strain AH820) protein is Endonuclease MutS2.